Reading from the N-terminus, the 408-residue chain is DNA polymerase processivity factor (408 aa).

A Nuclear localization signal motif is present at residues 344–353 (KKRRNLLTKR).

The protein belongs to the herpesviridae DNA polymerase processivity factor family. In terms of assembly, interacts with the DNA polymerase catalytic subunit. Interacts with the origin-binding protein.

It is found in the host nucleus. Plays an essential role in viral DNA replication by acting as the polymerase accessory subunit. Associates with the viral polymerase to increase its processivity and forms high-affinity direct interactions with DNA. Facilitates the origin-binding protein loading onto DNA thus increasing its ability to assemble into a functional complex capable of unwinding duplex DNA. The protein is DNA polymerase processivity factor of Varicella-zoster virus (strain Oka vaccine) (HHV-3).